A 163-amino-acid chain; its full sequence is Nucleotide-binding protein Mmcs_0777 (163 aa).

It belongs to the YajQ family.

Its function is as follows. Nucleotide-binding protein. This is Nucleotide-binding protein Mmcs_0777 from Mycobacterium sp. (strain MCS).